Here is an 876-residue protein sequence, read N- to C-terminus: Alanine--tRNA ligase (876 aa).

Position 74 is an N6-acetyllysine (Lys74). 4 residues coordinate Zn(2+): His564, His568, Cys666, and His670.

It belongs to the class-II aminoacyl-tRNA synthetase family. As to quaternary structure, homotetramer. Zn(2+) serves as cofactor.

Its subcellular location is the cytoplasm. The enzyme catalyses tRNA(Ala) + L-alanine + ATP = L-alanyl-tRNA(Ala) + AMP + diphosphate. Its function is as follows. Catalyzes the attachment of alanine to tRNA(Ala) in a two-step reaction: alanine is first activated by ATP to form Ala-AMP and then transferred to the acceptor end of tRNA(Ala). Also edits incorrectly charged Ser-tRNA(Ala) and Gly-tRNA(Ala) via its editing domain. In Shigella dysenteriae serotype 1 (strain Sd197), this protein is Alanine--tRNA ligase.